We begin with the raw amino-acid sequence, 375 residues long: Solute carrier family 35 member F2 (375 aa).

Met-1 is subject to N-acetylmethionine. A phosphoserine mark is found at Ser-5, Ser-22, Ser-25, and Ser-28. A run of 10 helical transmembrane segments spans residues 39-59 (ILKTIALGQMLSLCICGTAIT), 73-93 (MLQSFINYCLLFLVYTLMLAF), 108-126 (WWKYTLLGLADVEANYLIV), 136-156 (SVQLLDCFGIPVLMALSWFIL), 165-185 (FIAVFVCLLGVGTMVGADILA), 195-215 (VLIGDILVLLGASLYAVSNVC), 227-247 (EFLGMVGLFGTIISGIQLLIV), 263-283 (LLFVAFALCMFCLYSFMPLVI), 290-310 (SVNLGILTADLYSLFFGLFLF), and 314-334 (FSGLYILSFTVIMVGFILYCS). Residue Ser-372 is modified to Phosphoserine.

It belongs to the SLC35F solute transporter family.

It is found in the membrane. Functionally, putative solute transporter. This chain is Solute carrier family 35 member F2 (Slc35f2), found in Mus musculus (Mouse).